Here is a 757-residue protein sequence, read N- to C-terminus: Exo-alpha-(1-&gt;6)-L-arabinopyranosidase (757 aa).

The active site involves Asp232.

It belongs to the glycosyl hydrolase 3 family. In terms of assembly, homotetramer.

Completely inhibited by Cu(2+) and Fe(2+). Its function is as follows. Catalyzes the hydrolysis of a non-reducing terminal alpha-L-arabinopyranosidic linkage in ginsenoside Rb2 (alpha-L-arabinopyranosyl-(1-&gt;6)-alpha-D-glucopyranosyl) to release alpha-D-glucopyranosyl (Rd). It is not able to hydrolyze alpha-L-arabinofuranosyl-(1-&gt;6)-alpha-D-glucopyranosyl (Rc). The chain is Exo-alpha-(1-&gt;6)-L-arabinopyranosidase from Bifidobacterium breve (strain ACS-071-V-Sch8b).